The chain runs to 227 residues: DNA repair protein RecO (227 aa).

The protein belongs to the RecO family.

Functionally, involved in DNA repair and RecF pathway recombination. The sequence is that of DNA repair protein RecO from Pseudomonas putida (strain ATCC 47054 / DSM 6125 / CFBP 8728 / NCIMB 11950 / KT2440).